The chain runs to 249 residues: MVDRLANSEANTRRISIVENCFGAAGQPLTIPGRVLIGEGVLTKLCRKKPKARQFFLFNDILVYGNIVIQKKKYNKQHIIPLENVTIDSIQDEGDLRNGWLIKTPTKSFAVYAATATEKSEWMNHINKCVSDLLSKSGKTPSNEHAAVWVPDSEATVCMRCQKAKFTPVNRRHHCRKCGFVVCGPCSEKRFLLPSQSSKPVRICDSCYDLLSTGEMTACQSTRSDSYSQSPKSSLNDASDDDDDEDSSD.

The PH domain occupies 35–131 (VLIGEGVLTK…WMNHINKCVS (97 aa)). The segment at 152-212 (DSEATVCMRC…ICDSCYDLLS (61 aa)) adopts an FYVE-type zinc-finger fold. Residues Cys-158, Cys-161, Cys-175, Cys-178, Cys-183, Cys-186, Cys-204, and Cys-207 each contribute to the Zn(2+) site. Over residues 219–232 (CQSTRSDSYSQSPK) the composition is skewed to polar residues. Residues 219-249 (CQSTRSDSYSQSPKSSLNDASDDDDDEDSSD) form a disordered region. Residues 238–249 (ASDDDDDEDSSD) show a composition bias toward acidic residues.

It localises to the early endosome membrane. The protein localises to the endoplasmic reticulum. Its function is as follows. May play a role in early endosome fusion upstream of RAB5, hence regulating receptor trafficking and fluid-phase transport. Enhances cellular sensitivity to TNF-induced apoptosis. The protein is Pleckstrin homology domain-containing family F member 2 (PLEKHF2) of Gallus gallus (Chicken).